A 932-amino-acid polypeptide reads, in one-letter code: Adhesion G protein-coupled receptor E2 (932 aa).

Residues 1 to 15 (MWGFWLLLFWGFSGT) form the signal peptide. At 16-652 (HRWGMTTLAI…TMEFSLYIIS (637 aa)) the chain is on the extracellular side. EGF-like domains are found at residues 32–69 (GVNE…SNGQ) and 81–119 (DVNE…SAGG). 11 disulfide bridges follow: Cys-36–Cys-48, Cys-42–Cys-57, Cys-85–Cys-98, Cys-92–Cys-107, Cys-137–Cys-149, Cys-143–Cys-158, Cys-160–Cys-171, Cys-177–Cys-189, Cys-183–Cys-198, Cys-226–Cys-239, and Cys-233–Cys-248. Positions 133–172 (DVDECLTIGICPKNSNCSNSVGSYSCTCQSGFVSNGSTCE) constitute an EGF-like 3; calcium-binding domain. 2 N-linked (GlcNAc...) asparagine glycosylation sites follow: Asn-148 and Asn-167. The EGF-like 4; calcium-binding domain occupies 173-210 (DEDECVTRNACPEHATCHNTLGSYYCTCNEGLEFSGGG). The region spanning 222–260 (DVDECSRNSTLCGPSFICINTLGSYSCSCPAGFSLSTFQ) is the EGF-like 5; calcium-binding domain. Asn-229 carries N-linked (GlcNAc...) asparagine glycosylation. Asn-269, Asn-283, Asn-309, Asn-333, Asn-344, Asn-363, Asn-405, Asn-417, Asn-474, and Asn-499 each carry an N-linked (GlcNAc...) asparagine glycan. One can recognise an EGF-like 6; calcium-binding domain in the interval 272–307 (DIDECDDICPSNSSCTNTLGSYFCTCHPGFASSNGQ). Cystine bridges form between Cys-276–Cys-286 and Cys-280–Cys-295. Positions 319–354 (DIDECTQDPFRCGRNSSCTNVPGSYNCSCLPDFRMD) constitute an EGF-like 7; calcium-binding domain. Cystine bridges form between Cys-323-Cys-336 and Cys-330-Cys-345. The 162-residue stretch at 482 to 643 (EYLEIESKVI…AIIMASGELT (162 aa)) folds into the GAIN-B domain. The short motif at 507-509 (RGD) is the Cell attachment site element. Cystine bridges form between Cys-596–Cys-625 and Cys-613–Cys-627. Positions 596–643 (CVSWNTDVEDGRWTPSGCETVEASETHTVCSCNRMTNLAIIMASGELT) are GPS. A helical transmembrane segment spans residues 653–673 (YVGTVISLVCLALAIATFLLF). At 674-681 (RAVQNHNT) the chain is on the cytoplasmic side. Residues 682-702 (YLHLHLCVCLFLAKILFLTGI) form a helical membrane-spanning segment. Over 703 to 719 (DKTDNQTACAIIAGFLH) the chain is Extracellular. Residue Asn-707 is glycosylated (N-linked (GlcNAc...) asparagine). Residues 720 to 740 (YLFLACFFWMLVEAVMLFLMV) form a helical membrane-spanning segment. Topologically, residues 741-756 (RNLKVVNYFSSRNIKM) are cytoplasmic. The chain crosses the membrane as a helical span at residues 757–777 (LHLCAFGYGLPVVVVIISATV). Residues 778-795 (HPWGYGMHNRCWLNTETG) lie on the Extracellular side of the membrane. A helical transmembrane segment spans residues 796–816 (FIWSFLGPVCMIITINSALLA). The Cytoplasmic portion of the chain corresponds to 817-849 (WTLWVLRQKLCSVNSEVSKLKDTRLLTFKAIAQ). Residues 850–870 (IFILGCSWVLGIFQIGPLASI) form a helical membrane-spanning segment. Residues 871 to 872 (MA) are Extracellular-facing. A helical transmembrane segment spans residues 873 to 893 (YLFTTINSLQGAFIFLIHCLL). Residues 894–932 (NRQVRDEYRKLLTRKTDLSSHSQTSGILLSSMPSTSKTG) are Cytoplasmic-facing.

Belongs to the G-protein coupled receptor 2 family. Adhesion G-protein coupled receptor (ADGR) subfamily.

Its subcellular location is the cell membrane. Orphan receptor involved in cell adhesion and probably in cell-cell interactions involved specifically cells of the immune system. May play a role in regulatory T-cells (Treg) development. The polypeptide is Adhesion G protein-coupled receptor E2 (Adgre1) (Rattus norvegicus (Rat)).